Here is a 445-residue protein sequence, read N- to C-terminus: UPF0210 protein SP_0239 (445 aa).

This sequence belongs to the UPF0210 family. As to quaternary structure, homodimer.

In Streptococcus pneumoniae serotype 4 (strain ATCC BAA-334 / TIGR4), this protein is UPF0210 protein SP_0239.